The primary structure comprises 342 residues: Ribosomal RNA small subunit methyltransferase H (342 aa).

Residues 36-38 (GGH), Asp56, Phe82, Asp100, and Gln107 each bind S-adenosyl-L-methionine. The segment at 311–342 (GESGMGKGNSAAASRFPTADSPFPASANGDAA) is disordered.

It belongs to the methyltransferase superfamily. RsmH family.

The protein resides in the cytoplasm. It carries out the reaction cytidine(1402) in 16S rRNA + S-adenosyl-L-methionine = N(4)-methylcytidine(1402) in 16S rRNA + S-adenosyl-L-homocysteine + H(+). Specifically methylates the N4 position of cytidine in position 1402 (C1402) of 16S rRNA. The polypeptide is Ribosomal RNA small subunit methyltransferase H (Xanthomonas axonopodis pv. citri (strain 306)).